The sequence spans 679 residues: Glycine--tRNA ligase beta subunit (679 aa).

The protein belongs to the class-II aminoacyl-tRNA synthetase family. In terms of assembly, tetramer of two alpha and two beta subunits.

It localises to the cytoplasm. The catalysed reaction is tRNA(Gly) + glycine + ATP = glycyl-tRNA(Gly) + AMP + diphosphate. In Streptococcus pyogenes serotype M2 (strain MGAS10270), this protein is Glycine--tRNA ligase beta subunit.